The following is a 174-amino-acid chain: Crossover junction endodeoxyribonuclease RuvC (174 aa).

Active-site residues include D8, E68, and D140. Residues D8, E68, and D140 each contribute to the Mg(2+) site.

Belongs to the RuvC family. Homodimer which binds Holliday junction (HJ) DNA. The HJ becomes 2-fold symmetrical on binding to RuvC with unstacked arms; it has a different conformation from HJ DNA in complex with RuvA. In the full resolvosome a probable DNA-RuvA(4)-RuvB(12)-RuvC(2) complex forms which resolves the HJ. The cofactor is Mg(2+).

Its subcellular location is the cytoplasm. It catalyses the reaction Endonucleolytic cleavage at a junction such as a reciprocal single-stranded crossover between two homologous DNA duplexes (Holliday junction).. In terms of biological role, the RuvA-RuvB-RuvC complex processes Holliday junction (HJ) DNA during genetic recombination and DNA repair. Endonuclease that resolves HJ intermediates. Cleaves cruciform DNA by making single-stranded nicks across the HJ at symmetrical positions within the homologous arms, yielding a 5'-phosphate and a 3'-hydroxyl group; requires a central core of homology in the junction. The consensus cleavage sequence is 5'-(A/T)TT(C/G)-3'. Cleavage occurs on the 3'-side of the TT dinucleotide at the point of strand exchange. HJ branch migration catalyzed by RuvA-RuvB allows RuvC to scan DNA until it finds its consensus sequence, where it cleaves and resolves the cruciform DNA. The polypeptide is Crossover junction endodeoxyribonuclease RuvC (Legionella pneumophila (strain Corby)).